The chain runs to 783 residues: Probable galactinol--sucrose galactosyltransferase 5 (783 aa).

Phosphoserine is present on residues S9 and S11.

It belongs to the glycosyl hydrolases 36 family.

It carries out the reaction alpha-D-galactosyl-(1-&gt;3)-1D-myo-inositol + sucrose = raffinose + myo-inositol. Functionally, transglycosidase operating by a ping-pong reaction mechanism. Involved in the synthesis of raffinose, a major soluble carbohydrate in seeds, roots and tubers. This Arabidopsis thaliana (Mouse-ear cress) protein is Probable galactinol--sucrose galactosyltransferase 5 (RFS5).